The following is a 293-amino-acid chain: D-alanine--D-alanine ligase (293 aa).

The region spanning 98–291 (KIIWKQHNLT…FNKLVVAIIN (194 aa)) is the ATP-grasp domain. 124 to 177 (DFPLPWMVKPTLEGSSIGISKVDSQIQLNNALMLAWQYNSHALIEQWIEGDEYT) lines the ATP pocket. The Mg(2+) site is built by Asp245, Glu258, and Asn260.

The protein belongs to the D-alanine--D-alanine ligase family. It depends on Mg(2+) as a cofactor. The cofactor is Mn(2+).

Its subcellular location is the cytoplasm. It catalyses the reaction 2 D-alanine + ATP = D-alanyl-D-alanine + ADP + phosphate + H(+). It functions in the pathway cell wall biogenesis; peptidoglycan biosynthesis. Its function is as follows. Cell wall formation. In Ruthia magnifica subsp. Calyptogena magnifica, this protein is D-alanine--D-alanine ligase.